The chain runs to 320 residues: MLSKRNPQLNRNGELIHLLSIEGLPRSIVTHILDTAANFVSVNDREVKKVPLLRGKSVFNLFFENSTRTRTTFEIAAKRLSADVLNLDIARSSASKGESLLDTIANLSAMAADLFVVRHSESGAPYLIAQHVAPHVHVINAGDGRHAHPTQGLLDMYTIRHYKKDFSNLTVAIVGDVLHSRVARSDIHGLTTLGCPEVRVVGPRTLVPGDLSHMGVRVCHTLEEGIRDADVVIMLRLQNERMSGALLPSSQEYFKSFGLTPEKLRLAKPDAIVMHPGPINRGVEIDSAVVDGPQAVILPQVTFGIAVRMAVMSIVAGNEA.

Carbamoyl phosphate-binding residues include Arg68 and Thr69. Residue Lys96 coordinates L-aspartate. Residues Arg118, His148, and Gln151 each contribute to the carbamoyl phosphate site. L-aspartate-binding residues include Arg181 and Arg236. Carbamoyl phosphate-binding residues include Gly277 and Pro278.

This sequence belongs to the aspartate/ornithine carbamoyltransferase superfamily. ATCase family. As to quaternary structure, heterododecamer (2C3:3R2) of six catalytic PyrB chains organized as two trimers (C3), and six regulatory PyrI chains organized as three dimers (R2).

It carries out the reaction carbamoyl phosphate + L-aspartate = N-carbamoyl-L-aspartate + phosphate + H(+). Its pathway is pyrimidine metabolism; UMP biosynthesis via de novo pathway; (S)-dihydroorotate from bicarbonate: step 2/3. In terms of biological role, catalyzes the condensation of carbamoyl phosphate and aspartate to form carbamoyl aspartate and inorganic phosphate, the committed step in the de novo pyrimidine nucleotide biosynthesis pathway. This Paracidovorax citrulli (strain AAC00-1) (Acidovorax citrulli) protein is Aspartate carbamoyltransferase catalytic subunit.